The chain runs to 267 residues: Pyrroline-5-carboxylate reductase (267 aa).

This sequence belongs to the pyrroline-5-carboxylate reductase family.

It is found in the cytoplasm. The enzyme catalyses L-proline + NADP(+) = (S)-1-pyrroline-5-carboxylate + NADPH + 2 H(+). It carries out the reaction L-proline + NAD(+) = (S)-1-pyrroline-5-carboxylate + NADH + 2 H(+). Its pathway is amino-acid biosynthesis; L-proline biosynthesis; L-proline from L-glutamate 5-semialdehyde: step 1/1. Catalyzes the reduction of 1-pyrroline-5-carboxylate (PCA) to L-proline. The chain is Pyrroline-5-carboxylate reductase from Synechocystis sp. (strain ATCC 27184 / PCC 6803 / Kazusa).